Consider the following 453-residue polypeptide: Glutamate--tRNA ligase 2 (453 aa).

Positions 10–20 match the 'HIGH' region motif; that stretch reads PSPTGFLHIGG. The 'KMSKS' region motif lies at 232 to 236; it reads KLSKR. Lys-235 serves as a coordination point for ATP.

The protein belongs to the class-I aminoacyl-tRNA synthetase family. Glutamate--tRNA ligase type 1 subfamily. In terms of assembly, monomer.

It localises to the cytoplasm. The enzyme catalyses tRNA(Glu) + L-glutamate + ATP = L-glutamyl-tRNA(Glu) + AMP + diphosphate. In terms of biological role, catalyzes the attachment of glutamate to tRNA(Glu) in a two-step reaction: glutamate is first activated by ATP to form Glu-AMP and then transferred to the acceptor end of tRNA(Glu). This chain is Glutamate--tRNA ligase 2, found in Wolbachia sp. subsp. Brugia malayi (strain TRS).